The primary structure comprises 474 residues: Synaptotagmin-17 (474 aa).

The disordered stretch occupies residues 60–112 (WLMASRSSDKDGDSVHTASEVPLTPRTNSPDGRRSSSDTSKSTYSLTRRISSL). Residues 96–112 (SDTSKSTYSLTRRISSL) show a composition bias toward low complexity. 2 positions are modified to phosphoserine: Ser118 and Ser119. 2 consecutive C2 domains span residues 184–310 (QLGM…HWWK) and 321–455 (ELGE…EQWH).

This sequence belongs to the synaptotagmin family.

It localises to the membrane. In terms of biological role, plays a role in dendrite formation by melanocytes. This Pongo abelii (Sumatran orangutan) protein is Synaptotagmin-17 (SYT17).